Consider the following 495-residue polypeptide: MSNIRVRFAPSPTGALHMGGARTALFNWLFARQNGGKFILRIEDTDFRRSREDSAQGIVEGLSWLGLDWDEGPDIGGPLGPYRQSERGDIYSRYLQELLDSGQAYYCFCSPEDLQKEREEAAQEKRDYKYGGRCKALKPEEASEMLQAGKPAVIRLKVPLDGNTVVPDLIRGDVSFSNALFDDFIIAKSDGWPTYNFAVVVDDFSMQISHVLRAEEHLSNTPRQLLIYRALGLKEPAFAHLSMILAPDRSKLSKRHGAISVQEFENQGYLPEALVNYLALLGWSTGKDIDIWSREEMMREFSLEHISKSPAIYDLEKLAWMNGQYMMRLDIESLMALVEPQAQQQGWLNEDNFDYFQQAVELVRNRAKTRDELLDALGYFFEEVKQYDEKGVKKHFGQQKASTMLSEVLEIVSNMGSFSAAELEEAFRQRAQELKIKAADLIHPTRLALSGRTATPGLFELMEVLGQEKCISRLEKALDFIAKLTTHGPEGHNHR.

Positions 10 to 20 (PSPTGALHMGG) match the 'HIGH' region motif. Positions 251–255 (KLSKR) match the 'KMSKS' region motif. Lys-254 is a binding site for ATP.

This sequence belongs to the class-I aminoacyl-tRNA synthetase family. Glutamate--tRNA ligase type 1 subfamily. In terms of assembly, monomer.

The protein resides in the cytoplasm. It catalyses the reaction tRNA(Glu) + L-glutamate + ATP = L-glutamyl-tRNA(Glu) + AMP + diphosphate. Catalyzes the attachment of glutamate to tRNA(Glu) in a two-step reaction: glutamate is first activated by ATP to form Glu-AMP and then transferred to the acceptor end of tRNA(Glu). This Syntrophomonas wolfei subsp. wolfei (strain DSM 2245B / Goettingen) protein is Glutamate--tRNA ligase 1.